The chain runs to 1377 residues: DNA-directed RNA polymerase subunit beta (1377 aa).

Belongs to the RNA polymerase beta chain family. The RNAP catalytic core consists of 2 alpha, 1 beta, 1 beta' and 1 omega subunit. When a sigma factor is associated with the core the holoenzyme is formed, which can initiate transcription.

The catalysed reaction is RNA(n) + a ribonucleoside 5'-triphosphate = RNA(n+1) + diphosphate. In terms of biological role, DNA-dependent RNA polymerase catalyzes the transcription of DNA into RNA using the four ribonucleoside triphosphates as substrates. The protein is DNA-directed RNA polymerase subunit beta of Orientia tsutsugamushi (strain Boryong) (Rickettsia tsutsugamushi).